The primary structure comprises 489 residues: Betaine aldehyde dehydrogenase (489 aa).

K(+) contacts are provided by Thr26 and Asp93. 150-152 (GAW) contributes to the NAD(+) binding site. Residue Lys162 is the Charge relay system of the active site. 176–179 (KPSE) provides a ligand contact to NAD(+). Residue Val180 participates in K(+) binding. 229–232 (GVET) serves as a coordination point for NAD(+). Position 245 (Leu245) interacts with K(+). The active-site Proton acceptor is Glu251. Gly253, Cys285, and Glu386 together coordinate NAD(+). Cys285 acts as the Nucleophile in catalysis. Cys285 carries the post-translational modification Cysteine sulfenic acid (-SOH). K(+)-binding residues include Lys456 and Gly459. Glu463 acts as the Charge relay system in catalysis.

It belongs to the aldehyde dehydrogenase family. Dimer of dimers. Requires K(+) as cofactor.

The catalysed reaction is betaine aldehyde + NAD(+) + H2O = glycine betaine + NADH + 2 H(+). Its pathway is amine and polyamine biosynthesis; betaine biosynthesis via choline pathway; betaine from betaine aldehyde: step 1/1. In terms of biological role, involved in the biosynthesis of the osmoprotectant glycine betaine. Catalyzes the irreversible oxidation of betaine aldehyde to the corresponding acid. This is Betaine aldehyde dehydrogenase from Burkholderia pseudomallei (strain 668).